The sequence spans 447 residues: Glutamate--tRNA ligase 1 (447 aa).

A 'HIGH' region motif is present at residues 10–20; sequence PSPTGMLHVGN. The 'KMSKS' region signature appears at 240–244; the sequence is KISKR. Lys-243 is an ATP binding site.

Belongs to the class-I aminoacyl-tRNA synthetase family. Glutamate--tRNA ligase type 1 subfamily. Monomer.

It localises to the cytoplasm. The enzyme catalyses tRNA(Glu) + L-glutamate + ATP = L-glutamyl-tRNA(Glu) + AMP + diphosphate. Functionally, catalyzes the attachment of glutamate to tRNA(Glu) in a two-step reaction: glutamate is first activated by ATP to form Glu-AMP and then transferred to the acceptor end of tRNA(Glu). This is Glutamate--tRNA ligase 1 from Rickettsia conorii (strain ATCC VR-613 / Malish 7).